A 303-amino-acid polypeptide reads, in one-letter code: Glutamyl-Q tRNA(Asp) synthetase (303 aa).

L-glutamate is bound by residues 9–13 (RFAPS) and glutamate 45. The 'HIGH' region motif lies at 12-22 (PSPSGSLHFGS). The Zn(2+) site is built by cysteine 101, cysteine 103, tyrosine 115, and cysteine 119. L-glutamate-binding residues include tyrosine 172 and arginine 190. The 'KMSKS' region signature appears at 228 to 232 (KLSKQ). Lysine 231 is a binding site for ATP.

The protein belongs to the class-I aminoacyl-tRNA synthetase family. GluQ subfamily. Requires Zn(2+) as cofactor.

In terms of biological role, catalyzes the tRNA-independent activation of glutamate in presence of ATP and the subsequent transfer of glutamate onto a tRNA(Asp). Glutamate is transferred on the 2-amino-5-(4,5-dihydroxy-2-cyclopenten-1-yl) moiety of the queuosine in the wobble position of the QUC anticodon. In Serratia proteamaculans (strain 568), this protein is Glutamyl-Q tRNA(Asp) synthetase.